The following is a 283-amino-acid chain: S-methyl-5'-thioadenosine phosphorylase (283 aa).

Thr-18 is a binding site for phosphate. Lys-51 is modified (N6-acetyllysine). Phosphate-binding positions include 60–61 (RH) and 93–94 (TA). Substrate is bound at residue Met-196. Thr-197 is a binding site for phosphate. 220–222 (DYD) is a binding site for substrate.

It belongs to the PNP/MTAP phosphorylase family. MTAP subfamily. In terms of assembly, homotrimer. Ubiquitously expressed.

The protein localises to the cytoplasm. It is found in the nucleus. It catalyses the reaction S-methyl-5'-thioadenosine + phosphate = 5-(methylsulfanyl)-alpha-D-ribose 1-phosphate + adenine. It functions in the pathway amino-acid biosynthesis; L-methionine biosynthesis via salvage pathway; S-methyl-5-thio-alpha-D-ribose 1-phosphate from S-methyl-5'-thioadenosine (phosphorylase route): step 1/1. Inhibited by 5'-methylthiotubercin and 5'-chloroformycin. Functionally, catalyzes the reversible phosphorylation of S-methyl-5'-thioadenosine (MTA) to adenine and 5-methylthioribose-1-phosphate. Involved in the breakdown of MTA, a major by-product of polyamine biosynthesis. Responsible for the first step in the methionine salvage pathway after MTA has been generated from S-adenosylmethionine. Has broad substrate specificity with 6-aminopurine nucleosides as preferred substrates. The protein is S-methyl-5'-thioadenosine phosphorylase of Homo sapiens (Human).